Here is a 386-residue protein sequence, read N- to C-terminus: Ribonucleoside-diphosphate reductase subunit M2 (386 aa).

Residue Ser-20 is modified to Phosphoserine. Residue Thr-33 is modified to Phosphothreonine. The Cy signature appears at 49 to 51; the sequence is RRI. Positions 139, 170, and 173 each coordinate Fe cation. Tyr-177 is an active-site residue. Fe cation-binding residues include Glu-233, Glu-267, and His-270.

Belongs to the ribonucleoside diphosphate reductase small chain family. As to quaternary structure, heterodimer of a large and a small subunit. Interacts (via Cy motif and when phosphorylated at Thr-33) with CCNF; the interaction occurs exclusively in G2 and early M. Fe cation serves as cofactor. In terms of processing, phosphorylation on Ser-20 relieves the inhibitory effect on Wnt signaling. Phosphorylated on Thr-33 by CDK1 and CDK2; predominantly in G2 and M phase. Ubiquitinated by the SCF(CCNF) E3 ubiquitin-protein ligase complex; leading to its degradation by the proteasome.

It localises to the cytoplasm. The protein resides in the nucleus. The catalysed reaction is a 2'-deoxyribonucleoside 5'-diphosphate + [thioredoxin]-disulfide + H2O = a ribonucleoside 5'-diphosphate + [thioredoxin]-dithiol. Its function is as follows. Provides the precursors necessary for DNA synthesis. Catalyzes the biosynthesis of deoxyribonucleotides from the corresponding ribonucleotides. Inhibits Wnt signaling. In Mesocricetus auratus (Golden hamster), this protein is Ribonucleoside-diphosphate reductase subunit M2 (RRM2).